The primary structure comprises 767 residues: Pyrin (767 aa).

One can recognise a Pyrin domain in the interval 1–92; that stretch reads MAKTLGDHLL…AEELRKATGT (92 aa). Positions 94 to 219 are disordered; sequence HLIEENRVGG…LQGLYNNAPG (126 aa). 3 stretches are compositionally biased toward polar residues: residues 126 to 142, 165 to 176, and 183 to 208; these read GTQQNNDESDTLPSSQA, LDSQTKPWTRST, and TQGTQSPGDKESTASAQLRRNVSSAG. S241 bears the Phosphoserine mark. The segment at 311–346 is disordered; that stretch reads TSLIGEERCPTSWTENGNGSPETTESSGETAGSILS. A compositionally biased stretch (polar residues) spans 321 to 340; it reads TSWTENGNGSPETTESSGET. Residues 439–481 form a B box-type zinc finger; the sequence is QSLPQCPRHMKQVLLLFCEDHREPICLICRLSLEHQGHRVRPI. Residues C444, H447, C467, and H473 each coordinate Zn(2+). Positions 481-510 form a coiled coil; that stretch reads IEEAALEYKEQIREQLERLREMRGYVEEHR. A required for homotrimerization and induction of pyroptosomes region spans residues 489 to 647; sequence KEQIREQLER…CFSEMLSSEM (159 aa). Residues 697 to 719 are disordered; it reads GGSEPKDYLHPQPAQDTPELHEI.

In terms of assembly, homotrimer. Interacts (via the B box-type zinc finger) with PSTPIP1. Interacts (via the B30.2/SPRY domain) with several components of the inflammasome complex, including CASP1 p20 and p10 subunits, CASP5, PYCARD, NLRP1, NLRP2 and NLRP3, as well as with unprocessed IL1B; this interaction may lead to autophagic degradation of these proteins. Component of the AIM2 PANoptosome complex, a multiprotein complex that drives inflammatory cell death (PANoptosis). Interacts with NFKBIA and RELA. Interacts weakly with VASP and ACTR3. Interacts with active ULK1 (phosphorylated on 'Ser-317') and BECN1 simultaneously. Also interacts with ATG16L1 (via WD repeats), and with ATG8 family members, including GABARAP, GABARAPL1 and, to a lesser extent, GABARAPL2, MAP1LC3A/LC3A and MAP1LC3C/LC3C. Interacts with TRIM21. Interacts with YWHAB, YWHAE, YWHAG, YWHAH, YWHAQ and YWHAZ; the interaction is required for the down-regulation of pyrin pro-inflammatory activity. Post-translationally, phosphorylation at Ser-241 is required for the interaction with 14-3-3 proteins and down-regulation of pyrin pro-inflammatory activity. In terms of processing, degraded along with the delivery of its substrates to autolysosomal compartments (at protein level). Expressed in spleen peripheral blood granulocytes. Not expressed in lymphocytes, thymus, testis, ovary, heart, brain, lung, liver, kidney and muscle.

Its subcellular location is the cytoplasm. It localises to the cytoskeleton. The protein localises to the cell projection. The protein resides in the ruffle. It is found in the lamellipodium. Its subcellular location is the cytoplasmic vesicle. It localises to the autophagosome. The protein localises to the nucleus. Functionally, involved in the regulation of innate immunity and the inflammatory response in response to IFNG/IFN-gamma. Organizes autophagic machinery by serving as a platform for the assembly of ULK1, Beclin 1/BECN1, ATG16L1, and ATG8 family members and recognizes specific autophagy targets, thus coordinating target recognition with assembly of the autophagic apparatus and initiation of autophagy. Acts as an autophagy receptor for the degradation of several inflammasome components, including CASP1, NLRP1 and NLRP3, hence preventing excessive IL1B- and IL18-mediated inflammation. However, it can also have a positive effect in the inflammatory pathway, acting as an innate immune sensor that triggers PYCARD/ASC specks formation, caspase-1 activation, and IL1B and IL18 production. Together with AIM2, also acts as a mediator of pyroptosis, necroptosis and apoptosis (PANoptosis), an integral part of host defense against pathogens, in response to bacterial infection. It is required for PSTPIP1-induced PYCARD/ASC oligomerization and inflammasome formation. Recruits PSTPIP1 to inflammasomes, and is required for PSTPIP1 oligomerization. The chain is Pyrin from Mus musculus (Mouse).